A 466-amino-acid polypeptide reads, in one-letter code: Phosphoenolpyruvate carboxykinase (ATP) (466 aa).

Substrate contacts are provided by R61, Y196, and K202. ATP is bound by residues K202, H221, and 237–245 (GLSGTGKTT). 2 residues coordinate Mn(2+): K202 and H221. D258 is a binding site for Mn(2+). ATP contacts are provided by E286, R323, and T448. R323 is a substrate binding site.

The protein belongs to the phosphoenolpyruvate carboxykinase (ATP) family. The cofactor is Mn(2+).

It is found in the cytoplasm. The catalysed reaction is oxaloacetate + ATP = phosphoenolpyruvate + ADP + CO2. It participates in carbohydrate biosynthesis; gluconeogenesis. Functionally, involved in the gluconeogenesis. Catalyzes the conversion of oxaloacetate (OAA) to phosphoenolpyruvate (PEP) through direct phosphoryl transfer between the nucleoside triphosphate and OAA. The polypeptide is Phosphoenolpyruvate carboxykinase (ATP) (Deinococcus radiodurans (strain ATCC 13939 / DSM 20539 / JCM 16871 / CCUG 27074 / LMG 4051 / NBRC 15346 / NCIMB 9279 / VKM B-1422 / R1)).